Here is a 361-residue protein sequence, read N- to C-terminus: Peptide chain release factor 1 (361 aa).

An N5-methylglutamine modification is found at Gln-237. Basic and acidic residues predominate over residues 285–296 (DEKRRSAEESTR). Residues 285–305 (DEKRRSAEESTRRNLVGSGDR) are disordered.

The protein belongs to the prokaryotic/mitochondrial release factor family. Post-translationally, methylated by PrmC. Methylation increases the termination efficiency of RF1.

It localises to the cytoplasm. In terms of biological role, peptide chain release factor 1 directs the termination of translation in response to the peptide chain termination codons UAG and UAA. This Shewanella sediminis (strain HAW-EB3) protein is Peptide chain release factor 1.